The primary structure comprises 1205 residues: Caskin-2 (1205 aa).

6 ANK repeats span residues 48–77 (DGFSALHHAALSGNSELLLLLLEMQASVDI), 81–110 (NGMRPLHYAAWQGQPEPVRLLLRASASVNA), 114–143 (DGQIPLHLAAQYGHYEVSETLLQHQSNPCH), 147–176 (GKKTPLDLACEFGRVKVVQLLLNSHLCVSL), 188–217 (NFTTPLHLAAKNGHLEVIRLLLKLGIEINK), and 220–249 (KMGTALHEAALCGKTEVVKLLIENGVDVNI). An SH3 domain is found at 281–347 (SGILKVRALK…PPSIVEVISK (67 aa)). 2 stretches are compositionally biased toward polar residues: residues 377–388 (SPGSQLGINPDT) and 398–411 (GSESSVRSAGSGQS). Positions 377–411 (SPGSQLGINPDTSVAGDRHSVGSESSVRSAGSGQS) are disordered. SAM domains lie at 468–531 (KDAE…LIVA) and 537–601 (QIPV…LLDL). Residues 666–687 (RRSFSQESISSRSQGSGHSQES) show a composition bias toward low complexity. Disordered regions lie at residues 666 to 689 (RRSFSQESISSRSQGSGHSQESAS), 784 to 964 (RPGR…QRHL), 984 to 1054 (QIAA…SQEP), and 1132 to 1155 (SEASSREQTCIPQQSISNSDKGPP). Positions 823–840 (SSMSSAEGQSPEGQSSVK) are enriched in polar residues. Positions 908-919 (ISSQHSSSESIP) are enriched in low complexity. Over residues 942 to 959 (DATSELSPTQESQLQSAE) the composition is skewed to polar residues. Residues 1009-1037 (KNEEHDFNLTESDTVKRRPKVKEKEEESP) show a composition bias toward basic and acidic residues. Composition is skewed to polar residues over residues 1042–1054 (ANNSPSLIPSQEP) and 1137–1155 (REQTCIPQQSISNSDKGPP).

This Xenopus laevis (African clawed frog) protein is Caskin-2 (caskin2).